We begin with the raw amino-acid sequence, 319 residues long: Cobalamin biosynthesis protein CobD (319 aa).

The next 3 membrane-spanning stretches (helical) occupy residues 54–76, 154–173, and 301–318; these read VLLL…WLSY, GVTA…ALLY, and VLGF…IYAI.

Belongs to the CobD/CbiB family.

The protein localises to the cell membrane. It participates in cofactor biosynthesis; adenosylcobalamin biosynthesis. Its function is as follows. Converts cobyric acid to cobinamide by the addition of aminopropanol on the F carboxylic group. This is Cobalamin biosynthesis protein CobD from Halalkalibacterium halodurans (strain ATCC BAA-125 / DSM 18197 / FERM 7344 / JCM 9153 / C-125) (Bacillus halodurans).